Reading from the N-terminus, the 429-residue chain is MYRFAPSPTGDMHIGNLRAAIFNYICSLQDNSGFILRIEDTDNARNIDGKDKEIFDILTKFNIKWDTLYYQSKNLKFHQEFAAKLLAEKKAFLCFCDETTLESKKEAAKTAGKPYRYDGTCENLSDDDVLSNPRPAAVRLKIKNEPQSFYDAIKGEVKFEPQNIDSFVLLRADKTPTYNFACAIDDMLEGVTFVIRGEDHVSNTPKQNLIREALGYTGKIGYAHLPIILNKEGKKMSKRENSSSVKWLLNRGYMPEAIANYLILLGNKTPCEIFTLEESLQWFSIKNISKSPAKFDEEKLAQINREHIKKASDERLKELGLSKPHLARFYTQECSLISEIKDKIDQIYSKKDISDEWKQNANLIKDAVLNSNIPNNFDELKNEIIQITNLKGKSLFMPFRLLLTGSEHGPELKELYALIKDDIKEIIAK.

The 'HIGH' region motif lies at 6–16; it reads PSPTGDMHIGN. Positions 235-239 match the 'KMSKS' region motif; that stretch reads KMSKR. Lys238 is an ATP binding site.

The protein belongs to the class-I aminoacyl-tRNA synthetase family. Glutamate--tRNA ligase type 1 subfamily. In terms of assembly, monomer.

Its subcellular location is the cytoplasm. The enzyme catalyses tRNA(Glu) + L-glutamate + ATP = L-glutamyl-tRNA(Glu) + AMP + diphosphate. In terms of biological role, catalyzes the attachment of glutamate to tRNA(Glu) in a two-step reaction: glutamate is first activated by ATP to form Glu-AMP and then transferred to the acceptor end of tRNA(Glu). The protein is Glutamate--tRNA ligase 1 of Campylobacter fetus subsp. fetus (strain 82-40).